The primary structure comprises 110 residues: DNA-directed RNA polymerase subunit omega (110 aa).

This sequence belongs to the RNA polymerase subunit omega family. The RNAP catalytic core consists of 2 alpha, 1 beta, 1 beta' and 1 omega subunit. When a sigma factor is associated with the core the holoenzyme is formed, which can initiate transcription.

The enzyme catalyses RNA(n) + a ribonucleoside 5'-triphosphate = RNA(n+1) + diphosphate. Promotes RNA polymerase assembly. Latches the N- and C-terminal regions of the beta' subunit thereby facilitating its interaction with the beta and alpha subunits. The protein is DNA-directed RNA polymerase subunit omega of Vesicomyosocius okutanii subsp. Calyptogena okutanii (strain HA).